Here is a 120-residue protein sequence, read N- to C-terminus: uncharacterized protein (120 aa).

It belongs to the asp23 family.

This is an uncharacterized protein from Bacillus subtilis (strain 168).